Reading from the N-terminus, the 290-residue chain is MALRQCAIYGKGGIGKSTTTQNLVAALAEAGKKVMIVGCDPKADSTRLILHSKAQGTVMEMAASAGWVEDLELEDVLQIGFGGVKCVESGGPEPGVGCAGRGVITAINFLEEEGAYSDDLDFVFYDVLGDVVCGGFAMPIRENKAQEIYIVCSGEMMAMYAANNIAKGSVKYAHSGSVRLGGLICNSRKTDREDELIMALAAKIGTQMIHFVPRDNVVQHAEIRRMTVIEYDPKAGQADEYRALARKIVDNKLLVIPNPASMEELEELLMEFGIMEVEDESVVGKAAAEG.

Gly10–Ser17 lines the ATP pocket. Residue Cys98 participates in [4Fe-4S] cluster binding. The residue at position 101 (Arg101) is an ADP-ribosylarginine; by dinitrogenase reductase ADP-ribosyltransferase. Residue Cys133 coordinates [4Fe-4S] cluster.

The protein belongs to the NifH/BchL/ChlL family. Homodimer. The cofactor is [4Fe-4S] cluster. In terms of processing, the reversible ADP-ribosylation of Arg-101 inactivates the nitrogenase reductase and regulates nitrogenase activity.

The enzyme catalyses N2 + 8 reduced [2Fe-2S]-[ferredoxin] + 16 ATP + 16 H2O = H2 + 8 oxidized [2Fe-2S]-[ferredoxin] + 2 NH4(+) + 16 ADP + 16 phosphate + 6 H(+). In terms of biological role, the key enzymatic reactions in nitrogen fixation are catalyzed by the nitrogenase complex, which has 2 components: the iron protein (component 2) and a component 1 which is either a molybdenum-iron protein, a vanadium-iron, or an iron-iron protein. The chain is Nitrogenase iron protein 2 (vnfH) from Azotobacter vinelandii.